Consider the following 20-residue polypeptide: Luminal-binding protein (20 aa).

The protein belongs to the heat shock protein 70 family.

It is found in the endoplasmic reticulum lumen. Functionally, probably plays a role in facilitating the assembly of multimeric protein complexes inside the ER. In Phaseolus vulgaris (Kidney bean), this protein is Luminal-binding protein.